A 545-amino-acid polypeptide reads, in one-letter code: Esterase-5B (545 aa).

Positions 1–19 (MYCAKLILLLGCFWISSSA) are cleaved as a signal peptide. A disulfide bridge links cysteine 84 with cysteine 103. Residue asparagine 113 is glycosylated (N-linked (GlcNAc...) asparagine). The Acyl-ester intermediate role is filled by serine 207. Cysteine 259 and cysteine 271 form a disulfide bridge. N-linked (GlcNAc...) asparagine glycosylation is present at asparagine 421. The Charge relay system role is filled by histidine 467. N-linked (GlcNAc...) asparagine glycosylation is present at asparagine 507. Cysteine 515 and cysteine 536 form a disulfide bridge.

Belongs to the type-B carboxylesterase/lipase family. Homodimer.

It localises to the secreted. The catalysed reaction is a carboxylic ester + H2O = an alcohol + a carboxylate + H(+). The protein is Esterase-5B (Est-5B) of Drosophila persimilis (Fruit fly).